The primary structure comprises 445 residues: Phosphoglucosamine mutase 1 (445 aa).

Ser102 (phosphoserine intermediate) is an active-site residue. Residues Ser102, Asp241, Asp243, and Asp245 each contribute to the Mg(2+) site. A Phosphoserine modification is found at Ser102.

The protein belongs to the phosphohexose mutase family. Mg(2+) is required as a cofactor. Activated by phosphorylation.

The enzyme catalyses alpha-D-glucosamine 1-phosphate = D-glucosamine 6-phosphate. Its function is as follows. Catalyzes the conversion of glucosamine-6-phosphate to glucosamine-1-phosphate. The protein is Phosphoglucosamine mutase 1 of Shewanella sp. (strain MR-7).